Here is a 967-residue protein sequence, read N- to C-terminus: Leucine--tRNA ligase (967 aa).

A 'HIGH' region motif is present at residues 43–53 (PYLSGHLHVGH). The 'KMSKS' region motif lies at 650–654 (KMSKS). Lysine 653 is an ATP binding site.

This sequence belongs to the class-I aminoacyl-tRNA synthetase family.

It localises to the cytoplasm. The catalysed reaction is tRNA(Leu) + L-leucine + ATP = L-leucyl-tRNA(Leu) + AMP + diphosphate. In Thermococcus kodakarensis (strain ATCC BAA-918 / JCM 12380 / KOD1) (Pyrococcus kodakaraensis (strain KOD1)), this protein is Leucine--tRNA ligase.